Here is a 248-residue protein sequence, read N- to C-terminus: MRVDGRKCNQIRPVKITRNYTKYAEGSVLIENGDTKVICTASIEDKVPPFLKGRGEGWITCEYNMIPRATQVRKARDINRGRIDGRTMEIQRIIGRALRSVVDLRAIGEKTIWVDCDVIQADGGTRTASISGAFVALVDAVNKLHKQNPFTIYPIRDFVSAVSVGIVNDTRMLDLCYLEDSRAKVDMNVVMTDSGEFVEIQGTGEQNPFTREDLKELLALAEKGIKSMISAQKDSLKMDSLWIGTGGE.

Phosphate is bound by residues Arg86 and 124-126; that span reads GTR.

It belongs to the RNase PH family. As to quaternary structure, homohexameric ring arranged as a trimer of dimers.

It catalyses the reaction tRNA(n+1) + phosphate = tRNA(n) + a ribonucleoside 5'-diphosphate. Functionally, phosphorolytic 3'-5' exoribonuclease that plays an important role in tRNA 3'-end maturation. Removes nucleotide residues following the 3'-CCA terminus of tRNAs; can also add nucleotides to the ends of RNA molecules by using nucleoside diphosphates as substrates, but this may not be physiologically important. Probably plays a role in initiation of 16S rRNA degradation (leading to ribosome degradation) during starvation. This chain is Ribonuclease PH, found in Clostridium kluyveri (strain NBRC 12016).